The sequence spans 84 residues: Cell division topological specificity factor (84 aa).

It belongs to the MinE family.

Prevents the cell division inhibition by proteins MinC and MinD at internal division sites while permitting inhibition at polar sites. This ensures cell division at the proper site by restricting the formation of a division septum at the midpoint of the long axis of the cell. In Rhodopseudomonas palustris (strain BisA53), this protein is Cell division topological specificity factor.